The primary structure comprises 33 residues: Beta-theraphotoxin-Cm1b (33 aa).

Cystine bridges form between Cys2-Cys17, Cys9-Cys22, and Cys16-Cys29. Residue Leu33 is modified to Leucine amide.

The protein belongs to the neurotoxin 10 (Hwtx-1) family. 04 (CcoTx1) subfamily. As to expression, expressed by the venom gland.

The protein resides in the secreted. Its function is as follows. Inhibits several voltage-gated sodium channels and only one voltage-gated calcium channel (Cav2.2/CACNA1B (IC(50)=1.1 uM) and Nav1.2/SCN2A (IC(50)=3.7-80 nM), Nav1.3/SCN3A (IC(50)=88-5570 nM), Nav1.1/SCN1A (IC(50)=170-407 nM), Nav1.7/SCN9A (IC(50)=95.5-230 nM), Nav1.6/SCN6A (IC(50)=49.9-3990 nM), Nav1.4/SCN4A (IC(50)=113-400 nM or &gt;10 uM), Nav1.5/SCN5A (IC(50)=1524-1634 nM or &gt;10 uM)). The toxin acts by shifting the voltage dependence of channel activation to more depolarized potentials and by blocking the inward component of the sodium current. It shows moderate affinity for lipid bilayers without cholesterol and high affinity for lipid bilayers containing cholesterol. In vivo, this toxin causes general ataxia, lack of response to stimuli, and semiparalysis. After a few minutes, the mice are unable to stand, and breathing is reduced in rhythm and intensity. Symptoms gradually increase with progressive slowing of breathing and flaccid paralysis; death occurred within 10 to 20 minutes post injection. Animals remain totally flaccid, and no symptoms of excitatory neurotoxicity are observed. The sequence is that of Beta-theraphotoxin-Cm1b from Ceratogyrus marshalli (Straighthorned baboon tarantula).